We begin with the raw amino-acid sequence, 180 residues long: MKPERKRVSKLMAYILRHSPEEFGLRPDVEGFVSLNELVNALKTVYPEVTEEFVREIVENDPKGRYEIRGDRIRARYGHSFPVSLDHEEDTESRFLYHGTPRRNLPSILKEGLKPMKRQYVHVSTDKIEALETGRRHGREVVLLVIDAECLRKRGFKIYKAGKNVRIVERVPPDCITLAV.

It belongs to the KptA/TPT1 family.

Functionally, removes the 2'-phosphate from RNA via an intermediate in which the phosphate is ADP-ribosylated by NAD followed by a presumed transesterification to release the RNA and generate ADP-ribose 1''-2''-cyclic phosphate (APPR&gt;P). May function as an ADP-ribosylase. This chain is Probable RNA 2'-phosphotransferase, found in Thermococcus kodakarensis (strain ATCC BAA-918 / JCM 12380 / KOD1) (Pyrococcus kodakaraensis (strain KOD1)).